The primary structure comprises 222 residues: Probable elongation factor 1-beta (222 aa).

The tract at residues 90-111 is disordered; the sequence is KPAADDDDDVDLFGSDDEEDEE. Residues 94–111 are compositionally biased toward acidic residues; it reads DDDDDVDLFGSDDEEDEE. Ser104 carries the post-translational modification Phosphoserine.

The protein belongs to the EF-1-beta/EF-1-delta family. In terms of assembly, EF-1 is composed of 4 subunits: alpha, beta, beta' and gamma. Phosphorylation affects the GDP/GTP exchange rate.

Its function is as follows. EF-1-beta and EF-1-delta stimulate the exchange of GDP bound to EF-1-alpha to GTP. In Drosophila melanogaster (Fruit fly), this protein is Probable elongation factor 1-beta.